The following is a 238-amino-acid chain: Peroxisomal coenzyme A diphosphatase NUDT7 (238 aa).

Lysine 20 carries the N6-succinyllysine modification. Positions 37 to 172 constitute a Nudix hydrolase domain; the sequence is YNKYSVLLPL…VTRLGHRFIN (136 aa). The short motif at 77–98 is the Nudix box element; sequence KRDPTDMDDAATALREAQEEVG. Residues glutamate 92 and glutamate 96 each contribute to the Mg(2+) site. A Microbody targeting signal motif is present at residues 236–238; it reads SRL.

It belongs to the Nudix hydrolase family. PCD1 subfamily. In terms of assembly, monomer. It depends on Mn(2+) as a cofactor. Mg(2+) is required as a cofactor. Expressed in liver, kidney, pancreas, pituitary, small intestine, spleen, heart and placenta. Weakly expressed in brain.

The protein resides in the peroxisome. The catalysed reaction is hexanoyl-CoA + H2O = hexanoyl-4'-phosphopantetheine + adenosine 3',5'-bisphosphate + 2 H(+). It catalyses the reaction octanoyl-CoA + H2O = S-octanoyl-4'-phosphopantetheine + adenosine 3',5'-bisphosphate + 2 H(+). It carries out the reaction butanoyl-CoA + H2O = S-butanoyl-4'-phosphopantetheine + adenosine 3',5'-bisphosphate + 2 H(+). The enzyme catalyses decanoyl-CoA + H2O = decanoyl-4'-phosphopantetheine + adenosine 3',5'-bisphosphate + 2 H(+). The catalysed reaction is dodecanoyl-CoA + H2O = S-dodecanoyl-4'-phosphopantetheine + adenosine 3',5'-bisphosphate + 2 H(+). It catalyses the reaction tetradecanoyl-CoA + H2O = tetradecanoyl-4'-phosphopantetheine + adenosine 3',5'-bisphosphate + 2 H(+). It carries out the reaction choloyl-CoA + H2O = S-choloyl-4'-phosphopantetheine + adenosine 3',5'-bisphosphate + 2 H(+). The enzyme catalyses 3alpha,7alpha,12alpha-trihydroxy-5beta-cholestan-26-oyl-CoA + H2O = 3alpha,7alpha,12alpha-trihydroxy-5beta-cholestan-26-oyl-4'-phosphopantetheine + adenosine 3',5'-bisphosphate + 2 H(+). The catalysed reaction is acetyl-CoA + H2O = S-acetyl-4'-phosphopantetheine + adenosine 3',5'-bisphosphate + 2 H(+). It catalyses the reaction CoA + H2O = (R)-4'-phosphopantetheine + adenosine 3',5'-bisphosphate + 2 H(+). It carries out the reaction propanoyl-CoA + H2O = propanoyl-4'-phosphopantetheine + adenosine 3',5'-bisphosphate + 2 H(+). The enzyme catalyses malonyl-CoA + H2O = malonyl-4'-phosphopantetheine + adenosine 3',5'-bisphosphate + 2 H(+). The catalysed reaction is succinyl-CoA + H2O = succinyl-4'-phosphopantetheine + adenosine 3',5'-bisphosphate + 2 H(+). It catalyses the reaction a 5'-end CoA-ribonucleoside in mRNA + H2O = a 5'-end phospho-adenosine-phospho-ribonucleoside in mRNA + (R)-4'-phosphopantetheine + 2 H(+). Its activity is regulated as follows. Inhibited by fluoride. Functionally, fatty acyl-coenzyme A (CoA) diphosphatase that hydrolyzes fatty acyl-CoA to yield acyl-4'-phosphopantetheine and adenosine 3',5'-bisphosphate. Cleaves CoA, CoA esters and oxidized CoA with similar efficiencies. Preferentially hydrolyzes medium-chain acyl-CoAs and bile acid-CoAs. Has no activity toward NDP-sugars, CDP-alcohols, (deoxy)nucleoside 5'-triphosphates, nucleoside 5'-di or monophosphates, diadenosine polyphosphates, NAD, NADH, NADP, NADPH or thymidine-5'-monophospho-p-nitrophenyl ester. May be required to eliminate oxidized CoA from peroxisomes, or regulate CoA and acyl-CoA levels in this organelle in response to metabolic demand. Does not play a role in U8 snoRNA decapping activity. Binds U8 snoRNA. Exhibits decapping activity towards dpCoA-capped RNAs in vitro. This Homo sapiens (Human) protein is Peroxisomal coenzyme A diphosphatase NUDT7.